The following is a 211-amino-acid chain: Tudor-interacting repair regulator protein (211 aa).

Glycyl lysine isopeptide (Lys-Gly) (interchain with G-Cter in ubiquitin) cross-links involve residues lysine 10 and lysine 151. Residues 118–205 are interaction with PXN; the sequence is TLEQLHAVEI…TEKQKKALEK (88 aa).

Belongs to the Nudix hydrolase family. TIRR subfamily. In terms of assembly, homodimer. Interacts with TP53BP1 (via the Tudor-like domain); interaction is abolished following DNA damage and TP53BP1 phosphorylation by ATM. Interacts (via the cytoplasmic part) with SDC4. Interacts with TGFB1I1 and PXN.

It localises to the nucleus. Key regulator of TP53BP1 required to stabilize TP53BP1 and regulate its recruitment to chromatin. In absence of DNA damage, interacts with the tandem Tudor-like domain of TP53BP1, masking the region that binds histone H4 dimethylated at 'Lys-20' (H4K20me2), thereby preventing TP53BP1 recruitment to chromatin and maintaining TP53BP1 localization to the nucleus. Following DNA damage, ATM-induced phosphorylation of TP53BP1 and subsequent recruitment of RIF1 leads to dissociate NUDT16L1/TIRR from TP53BP1, unmasking the tandem Tudor-like domain and allowing recruitment of TP53BP1 to DNA double strand breaks (DSBs). Binds U8 snoRNA. This Mus musculus (Mouse) protein is Tudor-interacting repair regulator protein.